We begin with the raw amino-acid sequence, 151 residues long: Linear element protein Mug20 (151 aa).

Residues 56-140 (EEKLRALDKL…CAMEKLKMIE (85 aa)) are a coiled coil.

Component of linear elements (LinEs), which are similar to synaptonemal complexes, at least composed of rec27, rec25, rec10 and mug20. Interacts with rec10.

It is found in the cytoplasm. The protein resides in the nucleus. It localises to the chromosome. During meiotic DNA recombination, binds to and may help activate DNA double-strand break (DSB) hotspot sites. The protein is Linear element protein Mug20 of Schizosaccharomyces pombe (strain 972 / ATCC 24843) (Fission yeast).